The chain runs to 139 residues: Hydrogenase maturation factor HypA (139 aa).

Ni(2+) is bound by residues Met1 and His2. 2 residues coordinate Zn(2+): Cys73 and Cys76. Residue His98 participates in Ni(2+) binding. Positions 110 and 113 each coordinate Zn(2+).

The protein belongs to the HypA/HybF family. In terms of assembly, monomer and homodimer. Could also form hexamers. Forms a complex with HypB.

Functionally, involved in the maturation of [NiFe] hydrogenases. Required for nickel insertion into the metal center of the hydrogenase. The sequence is that of Hydrogenase maturation factor HypA from Thermococcus kodakarensis (strain ATCC BAA-918 / JCM 12380 / KOD1) (Pyrococcus kodakaraensis (strain KOD1)).